A 666-amino-acid polypeptide reads, in one-letter code: Endogenous retrovirus group K member 21 Gag polyprotein (666 aa).

Glycine 2 carries the N-myristoyl glycine lipid modification. 2 disordered regions span residues 165–189 (GKGP…AGQV) and 217–264 (ELQY…GSEL). Positions 232 to 247 (GMPPAPQGRAPYPQPP) are enriched in pro residues. 2 consecutive CCHC-type zinc fingers follow at residues 544–561 (GKCY…NCPV) and 580–597 (DLCP…QCRS). The tract at residues 598 to 641 (KFDKNGQPLSGNEQRGQPQAPQQTGAFPIQPFVPQGFQGQQPPL) is disordered. The segment covering 604–622 (QPLSGNEQRGQPQAPQQTG) has biased composition (polar residues). A compositionally biased stretch (low complexity) spans 624–640 (FPIQPFVPQGFQGQQPP).

The protein belongs to the beta type-B retroviral Gag protein family. HERV class-II K(HML-2) gag subfamily. Post-translationally, myristoylation is essential for retroviral assembly. Alteration of the glycine residue leads to a block in the budding of particles and an accumulation of Gag inside the cell. In terms of processing, specific enzymatic cleavages may yield mature proteins.

It localises to the cell membrane. The products of the Gag polyproteins of infectious retroviruses perform highly complex orchestrated tasks during the assembly, budding, maturation, and infection stages of the viral replication cycle. During viral assembly, the proteins form membrane associations and self-associations that ultimately result in budding of an immature virion from the infected cell. Gag precursors also function during viral assembly to selectively bind and package two plus strands of genomic RNA. Endogenous Gag proteins may have kept, lost or modified their original function during evolution. This is Endogenous retrovirus group K member 21 Gag polyprotein (ERVK-21) from Homo sapiens (Human).